Here is a 277-residue protein sequence, read N- to C-terminus: 2,5-diketo-D-gluconic acid reductase B (277 aa).

The active-site Proton donor is Y51. H109 is a substrate binding site. S189–N242 serves as a coordination point for NADP(+).

This sequence belongs to the aldo/keto reductase family.

The protein resides in the cytoplasm. It catalyses the reaction 2-dehydro-D-gluconate + NADP(+) = 2,5-didehydro-D-gluconate + NADPH + H(+). Its function is as follows. Catalyzes the reduction of 2,5-diketo-D-gluconic acid (25DKG) to 2-keto-L-gulonic acid (2KLG). 25DKGR-B has higher catalytic efficiency than 25DKGR-A. This chain is 2,5-diketo-D-gluconic acid reductase B (dkgB), found in Corynebacterium sp. (strain SHS752001).